A 223-amino-acid polypeptide reads, in one-letter code: DNA-directed RNA polymerase III subunit RPC7 (223 aa).

Residues 111-124 (MMPRKKCKKGDPKS) show a composition bias toward basic and acidic residues. The tract at residues 111–223 (MMPRKKCKKG…SDDNMDEATY (113 aa)) is disordered. Phosphothreonine is present on Thr134. A compositionally biased stretch (basic and acidic residues) spans 144-156 (KTIEELEKRGEGE). Residue Ser158 is modified to Phosphoserine. 2 stretches are compositionally biased toward acidic residues: residues 173–198 (KDDEEDGEEDAEQEDYDEEEQEEEND) and 206–223 (NGDDFGVDSDDNMDEATY).

The protein belongs to the eukaryotic RPC7 RNA polymerase subunit family. In terms of assembly, component of the RNA polymerase III complex consisting of 17 subunits: a ten-subunit horseshoe-shaped catalytic core composed of POLR3A/RPC1, POLR3B/RPC2, POLR1C/RPAC1, POLR1D/RPAC2, POLR3K/RPC10, POLR2E/RPABC1, POLR2F/RPABC2, POLR2H/RPABC3, POLR2K/RPABC4 and POLR2L/RPABC5; a mobile stalk composed of two subunits POLR3H/RPC8 and CRCP/RPC9, protruding from the core and functioning primarily in transcription initiation; and additional subunits homologous to general transcription factors of the RNA polymerase II machinery, POLR3C/RPC3-POLR3F/RPC6-POLR3G/RPC7 heterotrimer required for transcription initiation and POLR3D/RPC4-POLR3E/RPC5 heterodimer involved in both transcription initiation and termination. Directly interacts with POLR3C/RPC62. Also found in a trimeric complex with POLR3C/RPC3 and POLR3GL. In terms of tissue distribution, expressed at low levels in the liver.

The protein localises to the nucleus. The protein resides in the cytoplasm. In terms of biological role, DNA-dependent RNA polymerase catalyzes the transcription of DNA into RNA using the four ribonucleoside triphosphates as substrates. Specific peripheric component of RNA polymerase III (Pol III) which synthesizes small non-coding RNAs including 5S rRNA, snRNAs, tRNAs and miRNAs from at least 500 distinct genomic loci. Acts as a long tether that bridges POLR3C/RPC3-POLR3F/RPC6-POLR3G/RPC7 heterotrimer and the mobile stalk of Pol III, coordinating the dynamics of Pol III stalk and clamp modules during the transition from apo to elongation state. Pol III exists as two alternative complexes defined by the mutually exclusive incorporation of subunit POLR3G/RPC7alpha or POLR3GL/RPC7beta. POLR3G/RPC7alpha modulates Pol III transcriptome by specifically enhancing the transcription of snaR-A non-coding RNAs. At resting state, occupies the active site of apo Pol III and keeps Pol III in an autoinhibitory mode, preventing non-specific transcription. Pol III plays a key role in sensing and limiting infection by intracellular bacteria and DNA viruses. Acts as a nuclear and cytosolic DNA sensor involved in innate immune response. Can sense non-self dsDNA that serves as template for transcription into dsRNA. The non-self RNA polymerase III transcripts, such as Epstein-Barr virus-encoded RNAs (EBERs), induce type I interferon and NF-kappa-B through the RIG-I pathway. The protein is DNA-directed RNA polymerase III subunit RPC7 (Polr3g) of Mus musculus (Mouse).